The sequence spans 83 residues: MANVEIYTKETCPYCHRAKALLSSKGVSFQELPIDGNAAKREEMIKRSGRTTVPQIFIDAQHIGGCDDLYALDARGGLDPLLK.

Residues 2 to 83 enclose the Glutaredoxin domain; the sequence is ANVEIYTKET…ARGGLDPLLK (82 aa). Cys-12 and Cys-15 are disulfide-bonded.

Belongs to the glutaredoxin family. In terms of assembly, monomer.

Its function is as follows. The disulfide bond functions as an electron carrier in the glutathione-dependent synthesis of deoxyribonucleotides by the enzyme ribonucleotide reductase. In addition, it is also involved in reducing some disulfides in a coupled system with glutathione reductase. The sequence is that of Glutaredoxin 3 (grxC) from Escherichia coli O157:H7.